We begin with the raw amino-acid sequence, 835 residues long: MKVLALRHSVAQVYADTQVYTHDDSKDEYENAFLISNLTTHNILYLNYSVKTLQILNKSGIAAIEIQKMDELFTLIRCNFTYDYIDDVVYLHDYSYYTNNEIRTDQHWITKTNIEDYLLPGWKLTYVGYNGSDTRGHYNFSFRCQNAATDDDAIIEYIYSDELDFQSFILKKIKERMTTSLPIARLSNRVFRDKLFKTLSVNHDKVVNIGPRNESMFTFLDHPSIKQFSNGPYLVKDTIKLKQERWLGKRLSQFDIGQYKNMLNVLTTLYQYYDIYHEKPIVYMIGSAPSYWIYDVKQYSDLKFETWDPLDTPYSNLHHKELFYINDVQRLKDNSILYIDIRTDRGTMDWKEWRKMVERQTTDNLHIAYKYLSTGKAKICCVKMTAMDLELPISAKLLHHPTTEIRSEFYLMMDIWDSKNIKRFIPKGVLYSYINNTITENVFIQQPFKLKTLKNEYIIALYALSNDLNNREDVVKLINNQKKALITVRINNTFKDEPKVGFKNIYDWTFLPTDFETNGSIITSYDGCLGIFGLSISLASKPTGNNHLFILSGTDKYFKLDQFANHMSISRRSHQIRFSESATSYSGYIFRDLSNNNFNLIGTNVENSVSGHVYNALIYYRYNYSFDLKRWIYLHSTGKASIEGGKYYEHAPIELIYACRSAREFAKLQDDVTVLRYSNEIENYINKVYSITYADDPNYFIGVKFKNIPYKYNVKVPHLTFGVLNISEQMLPDVIVILKKFKNELFGMEITTSYTYMLSDEVYVANISGVLSTYFKIYNAFYKEQITFGQSRMFIPHVTLSFSNEKTVRIDNTKLYIDSIYLRKIKGDTVFDMTG.

The interval 171–245 is N7-methyltransferase activity; that stretch reads KKIKERMTTS…KDTIKLKQER (75 aa). Residues 246–428 are 2'-O-methyltransferase activity; sequence WLGKRLSQFD…KNIKRFIPKG (183 aa). An N7-methyltransferase activity region spans residues 429–555; that stretch reads VLYSYINNTI…NHLFILSGTD (127 aa). Residues 556–692 form a GTase/RTPase activity region; the sequence is KYFKLDQFAN…NYINKVYSIT (137 aa). Positions 693-835 are 2'-5'-phosphodiesterase activity; that stretch reads YADDPNYFIG…KGDTVFDMTG (143 aa). Residues H718, T720, H797, and T799 each act as for 2'-5'-phosphodiesterase activity in the active site.

The protein belongs to the rotavirus VP3 family. In terms of assembly, interacts with VP1. Interacts with VP2.

The protein resides in the virion. It carries out the reaction a 5'-end diphospho-ribonucleoside in mRNA + GTP + H(+) = a 5'-end (5'-triphosphoguanosine)-ribonucleoside in mRNA + diphosphate. It catalyses the reaction a 5'-end (5'-triphosphoguanosine)-ribonucleoside in mRNA + S-adenosyl-L-methionine = a 5'-end (N(7)-methyl 5'-triphosphoguanosine)-ribonucleoside in mRNA + S-adenosyl-L-homocysteine. The catalysed reaction is 5'-triphosphoadenylyl-(2'-&gt;5')-adenylyl-(2'-&gt;5')-adenosine + 2 H2O = 2 AMP + ATP + 2 H(+). Multifunctional enzyme involved in mRNA capping. Catalyzes the formation of the 5' cap structure on the viral plus-strand transcripts. Specifically binds to GTP and displays guanylyltransferase and methyltransferase activities. Has affinity for ssRNA but not for dsRNA. Capping activity is non-specific and caps RNAs that initiate with either a G or an A residue. Together with VP1 polymerase, forms a VP1-VP3 complex positioned near the channels situated at each of the five-fold vertices of the core. Following infection, the outermost layer of the virus is lost, leaving a double-layered particle (DLP) made up of the core and VP6 shell. VP1 then catalyzes the transcription of fully conservative plus-strand genomic RNAs that are capped by VP3 and extruded through the DLP's channels into the cytoplasm where they function as mRNAs for translation of viral proteins. DLPs probably have an RNA triphosphatase activity as well, whereas open cores do not. Functionally, counteracts the host innate immune response thanks to its phosphodiesterase that degrades the 5'-triphosphorylated, 2'-5' linked adenylate oligomers produced by the host cell IFN-inducible 2',5'-oligoadenylate synthetase (OAS). The host RNaseL is therefore not activated. This Rotavirus A (strain RVA/Human/Japan/S2/1980/G2P1B[4]) (RV-A) protein is Protein VP3.